The primary structure comprises 363 residues: Regulator of G-protein signaling rgs-3 (363 aa).

The interval 1–70 is disordered; sequence MWRSYKAETP…NSSATSPTPS (70 aa). Positions 21–35 are enriched in basic and acidic residues; that stretch reads LNLHDSSESDHEGRQ. Composition is skewed to low complexity over residues 36–50 and 58–70; these read SRSA…APAS and PITN…PTPS. RGS domains lie at 112-225 and 240-359; these read NCAN…LEYL and SFEG…IDLL.

May be phosphorylated and activated by egl-4.

In terms of biological role, modulates chemotaxis responses by regulating positively the sensitivity to CO2 levels in BAG neurons and by regulating negatively the sensitivity to quinine in ASH sensory neurons. This chain is Regulator of G-protein signaling rgs-3 (rgs-3), found in Caenorhabditis elegans.